The following is a 353-amino-acid chain: 3'(2'),5'-bisphosphate nucleotidase (353 aa).

Aspartate 50 acts as the Proton acceptor in catalysis. Positions 73, 136, 138, and 139 each coordinate Mg(2+). Threonine 141 (proton acceptor) is an active-site residue. Adenosine 3',5'-bisphosphate contacts are provided by threonine 141, histidine 232, serine 256, lysine 259, arginine 273, and aspartate 286. AMP contacts are provided by histidine 232, serine 256, lysine 259, arginine 273, and aspartate 286. Aspartate 286 lines the Mg(2+) pocket.

The protein belongs to the inositol monophosphatase superfamily. The cofactor is Mg(2+).

The catalysed reaction is 3'-phosphoadenylyl sulfate + H2O = adenosine 5'-phosphosulfate + phosphate. It catalyses the reaction adenosine 3',5'-bisphosphate + H2O = AMP + phosphate. The enzyme catalyses adenosine 2',5'-bisphosphate + H2O = AMP + phosphate. It carries out the reaction 1D-myo-inositol 1,4-bisphosphate + H2O = 1D-myo-inositol 4-phosphate + phosphate. The catalysed reaction is 1D-myo-inositol 1,3,4-trisphosphate + H2O = 1D-myo-inositol 3,4-bisphosphate + phosphate. Its activity is regulated as follows. Inhibited by Li(+) and Na(+). Functionally, phosphatase that converts adenosine 3'-phosphate 5'-phosphosulfate (PAPS) to adenosine 5'-phosphosulfate (APS) and 3'(2')-phosphoadenosine 5'-phosphate (PAP) to AMP. May regulate the flux of sulfur in the sulfur-activation pathway by converting PAPS to APS. Is also able to hydrolyze inositol 1,4-bisphosphate (Ins(1,4)P2) and inositol 1,3,4-trisphosphate (Ins(1,3,4)P3), but is not active on inositol 1,4,5-trisphosphate, inositol 1-phosphate, fructose 1,6-bisphosphate, AMP and ATP. In terms of biological role, confers resistance to lithium. The protein is 3'(2'),5'-bisphosphate nucleotidase (tol1) of Schizosaccharomyces pombe (strain 972 / ATCC 24843) (Fission yeast).